Consider the following 514-residue polypeptide: Bifunctional lysine-specific demethylase and histidyl-hydroxylase NO66 (514 aa).

A disordered region spans residues 1–53 (MKRGLEEEIEEMSEEEVGVNNNNNGKKKKKKVVKKSKPVPLTKSVPQVSSQPL). Positions 7 to 17 (EEIEEMSEEEV) are enriched in acidic residues. Over residues 25–37 (GKKKKKKVVKKSK) the composition is skewed to basic residues. The span at 44–53 (SVPQVSSQPL) shows a compositional bias: polar residues. The region spanning 180-327 (CSVRLLNPQT…IGKVLNRALE (148 aa)) is the JmjC domain. The Fe cation site is built by His226, Asp228, and His291.

This sequence belongs to the ROX family. NO66 subfamily. The cofactor is Fe(2+).

It localises to the nucleus. The enzyme catalyses N(6),N(6)-dimethyl-L-lysyl(36)-[histone H3] + 2 2-oxoglutarate + 2 O2 = L-lysyl(36)-[histone H3] + 2 formaldehyde + 2 succinate + 2 CO2. Its function is as follows. Oxygenase that can act as both a histone lysine demethylase and a ribosomal histidine hydroxylase. Specifically demethylates 'Lys-4' (H3K4me) and 'Lys-36' (H3K36me) of histone H3, thereby playing a central role in histone code. In Dictyostelium discoideum (Social amoeba), this protein is Bifunctional lysine-specific demethylase and histidyl-hydroxylase NO66 (jcdg).